Reading from the N-terminus, the 113-residue chain is Mitochondrial import inner membrane translocase subunit tim16 (113 aa).

Positions 56-108 (KILGLENVETVSKEDIDKKYNELLTINDPKDGGSEYLQIKISGAKHCLHSALK) are J-like.

Belongs to the TIM16/PAM16 family. Probable component of the PAM complex at least composed of a mitochondrial HSP70 protein, grepE, tim16 and tim14. Associates with the TIM23 complex.

It is found in the mitochondrion inner membrane. Functionally, regulates ATP-dependent protein translocation into the mitochondrial matrix. The protein is Mitochondrial import inner membrane translocase subunit tim16 (timm16) of Dictyostelium discoideum (Social amoeba).